The sequence spans 273 residues: MFGFPTATLLDCHGRYAQNVAFFNVMTEAHHKYDHSEATGSSSWDIQNSFRREKLEQKSPDSKTLQEDSPGVRQRVYECQECGKSFRQKGSLTLHERIHTGQKPFECTHCGKSFRAKGNLVTHQRIHTGEKPYQCKECGKSFSQRGSLAVHERLHTGQKPYECAICQRSFRNQSNLAVHRRVHSGEKPYRCDQCGKAFSQKGSLIVHIRVHTGLKPYACTQCRKSFHTRGNCILHGKIHTGETPYLCGQCGKSFTQRGSLAVHQRSCSQRLTL.

3 C2H2-type zinc fingers span residues 77 to 99 (YECQ…ERIH), 105 to 127 (FECT…QRIH), and 133 to 155 (YQCK…ERLH). The Zn(2+) site is built by Cys-79, Cys-82, His-95, His-99, Cys-107, Cys-110, His-123, His-127, Ser-141, Gln-144, Gly-157, Tyr-161, Phe-198, Lys-201, Leu-214, Ala-218, Cys-247, Cys-250, His-263, and Cys-267. 2 C2H2-type zinc fingers span residues 161 to 183 (YECA…RRVH) and 189 to 211 (YRCD…IRVH). A C2H2-type 6 zinc finger spans residues 217–239 (YACTQCRKSFHTRGNCILHGKIH). The CCHC-type zinc-finger motif lies at 245–267 (YLCGQCGKSFTQRGSLAVHQRSC).

It belongs to the krueppel C2H2-type zinc-finger protein family.

The protein localises to the nucleus. Functionally, may be involved in transcriptional regulation. This chain is Zinc finger protein 32 (ZNF32), found in Homo sapiens (Human).